A 98-amino-acid polypeptide reads, in one-letter code: Class II hydrophobin 1 (98 aa).

The signal sequence occupies residues 1-16; the sequence is MQFFTTVVLFAAAAMA. 4 disulfides stabilise this stretch: cysteine 29–cysteine 79, cysteine 39–cysteine 70, cysteine 40–cysteine 52, and cysteine 80–cysteine 92.

Belongs to the cerato-ulmin hydrophobin family. Homodimer. Homodimers further self-assemble to form highly ordered films at water-air interfaces through intermolecular interactions. In terms of tissue distribution, expressed in mycelium, conidiating mycelium and aerial hyphae.

The protein localises to the secreted. The protein resides in the cell wall. In terms of biological role, aerial growth, conidiation, and dispersal of filamentous fungi in the environment rely upon a capability of their secreting small amphipathic proteins called hydrophobins (HPBs) with low sequence identity. Class I can self-assemble into an outermost layer of rodlet bundles on aerial cell surfaces, conferring cellular hydrophobicity that supports fungal growth, development and dispersal; whereas Class II form highly ordered films at water-air interfaces through intermolecular interactions but contribute nothing to the rodlet structure. Hyd1 is a class II hydrophobin that plays probably a role during conidiophore development and in intraspecific signaling or hyphal fusion. Hyd1 and Hyd3 are jointly required for conidial hydrophobicity and dispersal, but seem not to be involved in mycelia hydrophobicity. Inhibits conidial germination in environments not suitable for mycelial growth. Not necessary for root adhesion and colonization. The sequence is that of Class II hydrophobin 1 from Bionectria ochroleuca (Gliocladium roseum).